Reading from the N-terminus, the 348-residue chain is 3-isopropylmalate dehydrogenase (348 aa).

G76–E87 contributes to the NAD(+) binding site. Residues R94, R104, R132, and D217 each contribute to the substrate site. D217, D241, and D245 together coordinate Mg(2+). G275–N287 provides a ligand contact to NAD(+).

It belongs to the isocitrate and isopropylmalate dehydrogenases family. LeuB type 1 subfamily. In terms of assembly, homodimer. Mg(2+) serves as cofactor. Requires Mn(2+) as cofactor.

It is found in the cytoplasm. The enzyme catalyses (2R,3S)-3-isopropylmalate + NAD(+) = 4-methyl-2-oxopentanoate + CO2 + NADH. The protein operates within amino-acid biosynthesis; L-leucine biosynthesis; L-leucine from 3-methyl-2-oxobutanoate: step 3/4. Its function is as follows. Catalyzes the oxidation of 3-carboxy-2-hydroxy-4-methylpentanoate (3-isopropylmalate) to 3-carboxy-4-methyl-2-oxopentanoate. The product decarboxylates to 4-methyl-2 oxopentanoate. The protein is 3-isopropylmalate dehydrogenase of Staphylococcus aureus (strain COL).